Here is a 417-residue protein sequence, read N- to C-terminus: UDP-N-acetylglucosamine 1-carboxyvinyltransferase (417 aa).

22–23 (KN) is a phosphoenolpyruvate binding site. Arg93 provides a ligand contact to UDP-N-acetyl-alpha-D-glucosamine. Residue Cys117 is the Proton donor of the active site. At Cys117 the chain carries 2-(S-cysteinyl)pyruvic acid O-phosphothioketal. UDP-N-acetyl-alpha-D-glucosamine contacts are provided by Asp304 and Ile326.

The protein belongs to the EPSP synthase family. MurA subfamily.

The protein localises to the cytoplasm. It carries out the reaction phosphoenolpyruvate + UDP-N-acetyl-alpha-D-glucosamine = UDP-N-acetyl-3-O-(1-carboxyvinyl)-alpha-D-glucosamine + phosphate. The protein operates within cell wall biogenesis; peptidoglycan biosynthesis. Its function is as follows. Cell wall formation. Adds enolpyruvyl to UDP-N-acetylglucosamine. This is UDP-N-acetylglucosamine 1-carboxyvinyltransferase from Neisseria gonorrhoeae (strain ATCC 700825 / FA 1090).